We begin with the raw amino-acid sequence, 75 residues long: U6-lycotoxin-Ls1f (75 aa).

Positions 1-21 (MKLLLFTALVLVVISLVEVEA) are cleaved as a signal peptide. A propeptide spanning residues 22–25 (ENER) is cleaved from the precursor.

The protein belongs to the neurotoxin 19 (CSTX) family. 06 (U6-Lctx) subfamily. In terms of processing, contains 4 disulfide bonds. Expressed by the venom gland.

Its subcellular location is the secreted. In Lycosa singoriensis (Wolf spider), this protein is U6-lycotoxin-Ls1f.